Consider the following 173-residue polypeptide: Small ribosomal subunit protein uS5 (173 aa).

Residues 17–80 form the S5 DRBM domain; the sequence is WQERVIQIRR…SDAKKHVVDV (64 aa).

The protein belongs to the universal ribosomal protein uS5 family. As to quaternary structure, part of the 30S ribosomal subunit. Contacts proteins S4 and S8.

In terms of biological role, with S4 and S12 plays an important role in translational accuracy. Located at the back of the 30S subunit body where it stabilizes the conformation of the head with respect to the body. This chain is Small ribosomal subunit protein uS5, found in Picosynechococcus sp. (strain ATCC 27264 / PCC 7002 / PR-6) (Agmenellum quadruplicatum).